Consider the following 1325-residue polypeptide: Cyclic nucleotide-gated channel beta-1 (1325 aa).

Disordered stretches follow at residues 1–124, 147–198, 227–279, 340–470, 482–637, and 659–694; these read MLGW…QVAV, PQPV…SLWL, AVLD…PGDP, WEDA…LDSC, LERT…SQNS, and KEKL…PAEA. Residues 1 to 732 are Cytoplasmic-facing; it reads MLGWVQRVLP…SIDPLTNLMY (732 aa). Positions 43 to 81 are enriched in acidic residues; it reads PQQEPEPEPEPEPEPEPEPEPEPEPEPEPEPEPVPEEAP. Polar residues predominate over residues 105–121; the sequence is LQETQVADPAQPTSQAQ. Over residues 370 to 379 the composition is skewed to basic and acidic residues; it reads IPRELTKIQE. 3 stretches are compositionally biased toward acidic residues: residues 380-393, 418-463, and 495-517; these read ERED…EEKE, EEKE…EEEP, and LPEE…EEKK. Residues 518-527 are compositionally biased toward basic and acidic residues; it reads EEEVEKKEEG. The span at 560–571 shows a compositional bias: pro residues; sequence TLPPPERPPPSP. Positions 633–643 are calmodulin-binding CaM1; the sequence is ASQNSAIINDR. Residues 733–754 form a helical membrane-spanning segment; that stretch reads ILWLFFVVLAWNWNCWLIPVRW. Residues 755–763 are Extracellular-facing; sequence AFPYQRADN. A helical membrane pass occupies residues 764 to 785; the sequence is IHFWLLMDYLCDFIYLLDITVF. At 786 to 800 the chain is on the cytoplasmic side; that stretch reads QMRLQFVKGGDIITD. The chain crosses the membrane as a helical span at residues 801-820; the sequence is KKEMRNNYLKSRRFKMDLLC. Residues 821 to 836 lie on the Extracellular side of the membrane; the sequence is LLPLDFLYLKLGINPL. The helical transmembrane segment at 837-849 threads the bilayer; it reads LRLPRCLKYMAFF. Over 850-861 the chain is Cytoplasmic; that stretch reads EFNNRLEAILSK. Residues 862 to 884 traverse the membrane as a helical segment; sequence AYVYRVIRTTAYLLYSLHLNSCL. The ion conduction pathway stretch occupies residues 862–961; the sequence is AYVYRVIRTT…IGQMRDVVGA (100 aa). Residues 885–907 lie on the Extracellular side of the membrane; the sequence is YYWASAFQGIGSTHWVYDGVGNS. The next 2 membrane-spanning stretches (helical) occupy residues 908–934 and 935–960; these read YIRC…LFEI and VFQL…DVVG. The Cytoplasmic portion of the chain corresponds to 961 to 1325; the sequence is AATAGQTYYR…VLEEKKEGAE (365 aa). Positions 964 to 1040 are C-linker; sequence AGQTYYRSCM…SIVSKVALFQ (77 aa). The tract at residues 1038–1142 is cNMP-binding domain; that stretch reads LFQGCDRQMI…LDKKDLNEIL (105 aa). A cyclic nucleotide-binding domain region spans residues 1044-1160; the sequence is RQMIFDMLKR…LLRKKARRML (117 aa). 5 residues coordinate 3',5'-cyclic GMP: Gly1105, Glu1106, Ser1108, Arg1118, and Thr1119. A 3',5'-cyclic AMP-binding site is contributed by Arg1118. The tract at residues 1224–1230 is calmodulin-binding CaM2; sequence QQQLLEQ. The segment covering 1226–1250 has biased composition (low complexity); the sequence is QLLEQAKSSQEAGGEEGSGATDQPA. The interval 1226 to 1325 is disordered; sequence QLLEQAKSSQ…VLEEKKEGAE (100 aa). A compositionally biased stretch (pro residues) spans 1262–1279; sequence KPPGPPEPSAQSSPPPAS.

It belongs to the cyclic nucleotide-gated cation channel (TC 1.A.1.5) family. CNGB1 subfamily. Rod outer segments. Olfactory sensory neurons.

Its subcellular location is the cell projection. The protein localises to the cilium membrane. It carries out the reaction Ca(2+)(in) = Ca(2+)(out). The catalysed reaction is Na(+)(in) = Na(+)(out). It catalyses the reaction K(+)(in) = K(+)(out). The enzyme catalyses NH4(+)(in) = NH4(+)(out). It carries out the reaction Rb(+)(in) = Rb(+)(out). The catalysed reaction is Li(+)(in) = Li(+)(out). It catalyses the reaction Cs(+)(in) = Cs(+)(out). Its function is as follows. Pore-forming subunit of the rod cyclic nucleotide-gated channel. Mediates rod photoresponses at dim light converting transient changes in intracellular cGMP levels into electrical signals. In the dark, cGMP levels are high and keep the channel open enabling a steady inward current carried by Na(+) and Ca(2+) ions that leads to membrane depolarization and neurotransmitter release from synaptic terminals. Upon photon absorption cGMP levels decline leading to channel closure and membrane hyperpolarization that ultimately slows neurotransmitter release and signals the presence of light, the end point of the phototransduction cascade. Pore-forming subunit of the olfactory cyclic nucleotide-gated channel. Operates in the cilia of olfactory sensory neurons where chemical stimulation of the odorant is converted to an electrical signal. Mediates odorant-induced cAMP-dependent Ca(2+) influx triggering neuron depolarization. The rise of intracellular Ca(2+) levels potentiates the olfactory response by activating Ca(2+)-dependent Cl(-) channels, but it also serves as a negative feedback signal to desensitize the channel for rapid adaptation to odorants. Conducts cGMP- and cAMP-gated ion currents, with permeability for monovalent and divalent cations. The selectivity for Ca(2+) over Na(+) increases with cGMP concentrations, whereas the selectivity among monovalent ions is independent of the cGMP levels. This chain is Cyclic nucleotide-gated channel beta-1, found in Mus musculus (Mouse).